A 110-amino-acid chain; its full sequence is Plasma membrane ATPase (110 aa).

Mg(2+) is bound by residues Asp72 and Asp76. The segment at 88-110 (APESTSLNLPNDKELSEIAEQAK) is disordered. Residues 98-110 (NDKELSEIAEQAK) show a composition bias toward basic and acidic residues.

Belongs to the cation transport ATPase (P-type) (TC 3.A.3) family. Type IIIA subfamily. The N-terminus is blocked.

It localises to the cell membrane. It carries out the reaction ATP + H2O + H(+)(in) = ADP + phosphate + 2 H(+)(out). In terms of biological role, the plasma membrane ATPase of plants and fungi is a hydrogen ion pump. The proton gradient it generates drives the active transport of nutrients by H(+)-symport. The resulting external acidification and/or internal alkinization may mediate growth responses. This Avena sativa (Oat) protein is Plasma membrane ATPase.